A 390-amino-acid chain; its full sequence is MTQVHFTLKSEEIQSIIEYSVKDDVSKNILTTVFNQLMENQRTEYIQAKEYERTENRQSQRNGYYERSFTTRVGTLELKVPRTRDGHFSPTVFERYQRNEKALMASMLEMYVSGVSTRKVSKIVEELCGKSVSKSFVSSLTEQLEPMVNEWQNRLLSEKNYPYLMTDVLYIKVREENRVLSKSCHIAIGITKDGDREIIGFMIQSGESEETWTTFFEYLKERGLQGTELVISDAHKGLVSAIRKSFTNVSWQRCQVHFLRNIFTTIPKKNSKSFREAVKGIFKFTDINLAREAKNRLIHDYIDQPKYSKACASLDDGFEDAFQYTVQGNSHNRLKSTNLIERLNQEVRRREKIIRIFPNQTSANRLIGAVLMDLHDEWIYSSRKYINFDK.

Belongs to the transposase mutator family.

Functionally, required for the transposition of the insertion element. This is Transposase for insertion sequence element IS256 in transposon Tn4001 from Enterococcus faecalis (strain ATCC 700802 / V583).